The chain runs to 100 residues: Urease subunit gamma (100 aa).

It belongs to the urease gamma subunit family. In terms of assembly, heterotrimer of UreA (gamma), UreB (beta) and UreC (alpha) subunits. Three heterotrimers associate to form the active enzyme.

It is found in the cytoplasm. It carries out the reaction urea + 2 H2O + H(+) = hydrogencarbonate + 2 NH4(+). The protein operates within nitrogen metabolism; urea degradation; CO(2) and NH(3) from urea (urease route): step 1/1. The protein is Urease subunit gamma of Rhodopseudomonas palustris (strain ATCC BAA-98 / CGA009).